We begin with the raw amino-acid sequence, 383 residues long: S-adenosylmethionine synthase (383 aa).

His-15 is a binding site for ATP. Mg(2+) is bound at residue Asp-17. Glu-43 is a K(+) binding site. Residues Glu-56 and Gln-99 each contribute to the L-methionine site. The tract at residues 99 to 109 is flexible loop; it reads QSPDINQGVDR. Residues 164–166, 230–231, Asp-239, 245–246, Ala-262, and Lys-266 each bind ATP; these read DAK, RF, and RK. An L-methionine-binding site is contributed by Asp-239. Lys-270 contacts L-methionine.

The protein belongs to the AdoMet synthase family. In terms of assembly, homotetramer; dimer of dimers. Mg(2+) serves as cofactor. K(+) is required as a cofactor.

It is found in the cytoplasm. It carries out the reaction L-methionine + ATP + H2O = S-adenosyl-L-methionine + phosphate + diphosphate. Its pathway is amino-acid biosynthesis; S-adenosyl-L-methionine biosynthesis; S-adenosyl-L-methionine from L-methionine: step 1/1. Catalyzes the formation of S-adenosylmethionine (AdoMet) from methionine and ATP. The overall synthetic reaction is composed of two sequential steps, AdoMet formation and the subsequent tripolyphosphate hydrolysis which occurs prior to release of AdoMet from the enzyme. The chain is S-adenosylmethionine synthase from Shewanella sp. (strain ANA-3).